Here is a 703-residue protein sequence, read N- to C-terminus: Cyclomaltodextrin glucanotransferase (703 aa).

A signal peptide spans 1–29; that stretch reads MNDLNDFLKTILLSFIFFLLLSLPTVAEA. Residues 30-160 are A1; it reads DVTNKVNYSK…GIKVIMDFTP (131 aa). Residues aspartate 52, asparagine 54, asparagine 57, and asparagine 58 each coordinate Ca(2+). Cysteine 68 and cysteine 75 are disulfide-bonded. Ca(2+) contacts are provided by glycine 76 and aspartate 78. A substrate-binding site is contributed by 122 to 123; sequence YW. Asparagine 161 contacts Ca(2+). The b stretch occupies residues 161–224; that stretch reads NHSSPALETN…NLYDLADYDL (64 aa). Histidine 162 provides a ligand contact to substrate. Isoleucine 212 lines the Ca(2+) pocket. 215-218 contacts substrate; the sequence is NLYD. A Ca(2+)-binding site is contributed by aspartate 221. An A2 region spans residues 225–428; the sequence is NNTVMDQYLK…LRQTNSALGY (204 aa). Arginine 249 is a substrate binding site. The active-site Nucleophile is the aspartate 251. 254–255 lines the substrate pocket; it reads KH. Histidine 255 contacts Ca(2+). The active-site Proton donor is glutamate 279. Residues histidine 349, aspartate 393, and arginine 397 each coordinate substrate. A c region spans residues 429-516; the sequence is GTTTERWLNE…SVAVWQVSNP (88 aa). The d stretch occupies residues 517–600; it reads STSPLIGQVG…SPTYKEFEVL (84 aa). Residues 520-598 form the IPT/TIG domain; sequence PLIGQVGPMM…IKSPTYKEFE (79 aa). Residues 599–703 enclose the CBM20 domain; it reads VLSGNQVSVR…TGTDTVMINW (105 aa). The segment at 601 to 703 is e; the sequence is SGNQVSVRFG…TGTDTVMINW (103 aa).

It belongs to the glycosyl hydrolase 13 family. In terms of assembly, monomer. The cofactor is Ca(2+).

It localises to the secreted. The catalysed reaction is Cyclizes part of a (1-&gt;4)-alpha-D-glucan chain by formation of a (1-&gt;4)-alpha-D-glucosidic bond.. The protein is Cyclomaltodextrin glucanotransferase (cgt) of Bacillus sp. (strain 1-1).